Here is a 312-residue protein sequence, read N- to C-terminus: Adenylyl-sulfate kinase, chloroplastic (312 aa).

Position 142–149 (142–149) interacts with ATP; the sequence is GLSGSGKS. Catalysis depends on Ser-216, which acts as the Phosphoserine intermediate.

The protein belongs to the APS kinase family.

The protein localises to the plastid. It is found in the chloroplast. The catalysed reaction is adenosine 5'-phosphosulfate + ATP = 3'-phosphoadenylyl sulfate + ADP + H(+). It functions in the pathway sulfur metabolism; hydrogen sulfide biosynthesis; sulfite from sulfate: step 2/3. Its function is as follows. Catalyzes the synthesis of activated sulfate. In Catharanthus roseus (Madagascar periwinkle), this protein is Adenylyl-sulfate kinase, chloroplastic (AKN).